The chain runs to 110 residues: MSFCSFSGGEIYKDHFESGMYVCAQCGYELFSSRSKYEHSSPWPAFTETIHEDSVSKQEERWGAYKVRCGKCGNGLGHEFVNDGPKHGLSRFUIFSSSLKFIPKVKNEQQ.

The 104-residue stretch at 1-104 (MSFCSFSGGE…FSSSLKFIPK (104 aa)) folds into the MsrB domain. Positions 23, 26, 69, and 72 each coordinate Zn(2+). The active-site Nucleophile is the Sec93. Sec93 is a non-standard amino acid (selenocysteine).

This sequence belongs to the MsrB Met sulfoxide reductase family. The cofactor is Zn(2+). In terms of tissue distribution, in the embryo, expressed in the polster, paraxial mesoderm, tectum, otic vesicle and liver.

Its subcellular location is the cytoplasm. It localises to the nucleus. The protein localises to the cytoskeleton. The catalysed reaction is L-methionyl-[protein] + [thioredoxin]-disulfide + H2O = L-methionyl-(R)-S-oxide-[protein] + [thioredoxin]-dithiol. It catalyses the reaction [thioredoxin]-disulfide + L-methionine + H2O = L-methionine (R)-S-oxide + [thioredoxin]-dithiol. Its function is as follows. Methionine-sulfoxide reductase that specifically reduces methionine (R)-sulfoxide back to methionine. While in many cases, methionine oxidation is the result of random oxidation following oxidative stress, methionine oxidation is also a post-translational modification that takes place on specific residue. Acts as a regulator of actin assembly by reducing methionine (R)-sulfoxide mediated by MICALs (mical1, mical2 or mical3) on actin, thereby promoting filament repolymerization. Plays a role in innate immunity by reducing oxidized actin, leading to actin repolymerization in macrophages. The chain is Methionine-R-sulfoxide reductase B1-A (msrb1) from Danio rerio (Zebrafish).